The primary structure comprises 270 residues: Allergen Asp f 7 (270 aa).

A signal peptide spans 1 to 21 (MAPIFKSLALVSALFAAISSA). Disordered regions lie at residues 53-97 (YPTP…QPTQ) and 113-167 (ADSA…GPCS). Over residues 63-81 (VVESTPTPTPSAAPEQAEP) the composition is skewed to low complexity. Polar residues predominate over residues 83–97 (ETSTQPETTKSQPTQ). Over residues 127 to 149 (PATTAAPSTSTTTQAAPSAPPAA) the composition is skewed to low complexity. A compositionally biased stretch (polar residues) spans 150–162 (NSGSTEKAASSGY).

The protein is Allergen Asp f 7 of Aspergillus fumigatus (strain ATCC MYA-4609 / CBS 101355 / FGSC A1100 / Af293) (Neosartorya fumigata).